Reading from the N-terminus, the 235-residue chain is tRNA (adenine(37)-N6)-methyltransferase (235 aa).

A TsaA-like domain is found at 6-147 (FEQIGVIRSP…YLPFAESLPD (142 aa)). S-adenosyl-L-methionine contacts are provided by residues 23-25 (PRQ), 64-65 (HQ), R92, and 127-130 (VDGT).

This sequence belongs to the tRNA methyltransferase O family. In terms of assembly, homodimer.

It carries out the reaction N(6)-L-threonylcarbamoyladenosine(37) in tRNA + S-adenosyl-L-methionine = N(6)-methyl,N(6)-L-threonylcarbamoyladenosine(37) in tRNA + S-adenosyl-L-homocysteine + H(+). S-adenosyl-L-methionine-dependent methyltransferase responsible for the addition of the methyl group in the formation of N6-methyl-N6-threonylcarbamoyladenosine at position 37 (m(6)t(6)A37) of the tRNA anticodon loop of tRNA(Thr)(GGU) that read codons starting with adenosine. The methyl group of m(6)t(6)A37 appears to slightly improve the efficiency of the tRNA decoding ability. This Escherichia coli (strain K12) protein is tRNA (adenine(37)-N6)-methyltransferase.